A 154-amino-acid polypeptide reads, in one-letter code: Protein MGF 300-2R (154 aa).

This sequence belongs to the asfivirus MGF 300 family.

Functionally, plays a role in virus cell tropism, and may be required for efficient virus replication in macrophages. In Ornithodoros (relapsing fever ticks), this protein is Protein MGF 300-2R.